The chain runs to 209 residues: Uridine kinase (209 aa).

12–19 is an ATP binding site; the sequence is GGTGSGKS.

It belongs to the uridine kinase family.

The protein resides in the cytoplasm. It carries out the reaction uridine + ATP = UMP + ADP + H(+). It catalyses the reaction cytidine + ATP = CMP + ADP + H(+). The protein operates within pyrimidine metabolism; CTP biosynthesis via salvage pathway; CTP from cytidine: step 1/3. It functions in the pathway pyrimidine metabolism; UMP biosynthesis via salvage pathway; UMP from uridine: step 1/1. The polypeptide is Uridine kinase (Clostridium tetani (strain Massachusetts / E88)).